A 528-amino-acid polypeptide reads, in one-letter code: Major facilitator-type transporter psiT2 (528 aa).

Residues 1–20 (MSPERSASLEPDEHSSLLSD) form a disordered region. 5 helical membrane-spanning segments follow: residues 87–107 (FYSGLIESVFACGEVCSIFML), 125–145 (LGVALFTALFGLSTSFTMMLV), 148–168 (VCAGLLAGATPIVHSVVSELT), 174–194 (ALVVPLYGLITPIGFAIGPLI), and 220–240 (FLPSFVPCCLAVVGVTFGYFF). The segment covering 260–270 (STSSISSRTST) has biased composition (low complexity). Residues 260 to 299 (STSSISSRTSTLYGATDDHNRDASESTALSPEEAEDEIDS) are disordered. A run of 6 helical transmembrane segments spans residues 322 to 342 (FLMFLYTSSDVLFSLYCFTAV), 357 to 377 (AFSVAGVIAMLMQLCITPWVL), 388 to 408 (FCMFSFPLVFALMGCLNPLAQ), 424 to 444 (GLLYAAIAVLLLLARVCVMAF), 460 to 479 (LATANGLVQVSMTIARALCP), and 493 to 513 (NILGGHLWVLIMVTISLAGVW).

It belongs to the major facilitator superfamily. TCR/Tet family.

It is found in the membrane. In terms of biological role, major facilitator-type transporter; part of the gene cluster that mediates the biosynthesis of psilocybin, a psychotropic tryptamine-derived natural product. In Psilocybe cyanescens, this protein is Major facilitator-type transporter psiT2.